Reading from the N-terminus, the 185-residue chain is Adenine phosphoribosyltransferase (185 aa).

Belongs to the purine/pyrimidine phosphoribosyltransferase family.

Its subcellular location is the cytoplasm. It carries out the reaction AMP + diphosphate = 5-phospho-alpha-D-ribose 1-diphosphate + adenine. It functions in the pathway purine metabolism; AMP biosynthesis via salvage pathway; AMP from adenine: step 1/1. Functionally, catalyzes a salvage reaction resulting in the formation of AMP, that is energically less costly than de novo synthesis. The chain is Adenine phosphoribosyltransferase (aprt-1) from Caenorhabditis elegans.